Reading from the N-terminus, the 369-residue chain is Putative agmatine deiminase (369 aa).

C361 (amidino-cysteine intermediate) is an active-site residue.

The protein belongs to the agmatine deiminase family.

The enzyme catalyses agmatine + H2O = N-carbamoylputrescine + NH4(+). The sequence is that of Putative agmatine deiminase from Streptococcus mutans serotype c (strain ATCC 700610 / UA159).